The primary structure comprises 607 residues: Elongation factor 4 (607 aa).

One can recognise a tr-type G domain in the interval 11–193 (EKIRNFSIIA…QIVEKVPAPQ (183 aa)). Residues 23–28 (DHGKST) and 140–143 (NKID) contribute to the GTP site.

Belongs to the TRAFAC class translation factor GTPase superfamily. Classic translation factor GTPase family. LepA subfamily.

It localises to the cell membrane. The enzyme catalyses GTP + H2O = GDP + phosphate + H(+). In terms of biological role, required for accurate and efficient protein synthesis under certain stress conditions. May act as a fidelity factor of the translation reaction, by catalyzing a one-codon backward translocation of tRNAs on improperly translocated ribosomes. Back-translocation proceeds from a post-translocation (POST) complex to a pre-translocation (PRE) complex, thus giving elongation factor G a second chance to translocate the tRNAs correctly. Binds to ribosomes in a GTP-dependent manner. The sequence is that of Elongation factor 4 from Lactococcus lactis subsp. lactis (strain IL1403) (Streptococcus lactis).